The sequence spans 185 residues: Photosystem I assembly protein Ycf4 (185 aa).

2 helical membrane-spanning segments follow: residues 20–40 (GNFFWACILFLGSLGFLSVGA) and 57–77 (ILFFPQGVVMSFYGIAGLFIS).

This sequence belongs to the Ycf4 family.

The protein localises to the plastid. Its subcellular location is the chloroplast thylakoid membrane. In terms of biological role, seems to be required for the assembly of the photosystem I complex. The sequence is that of Photosystem I assembly protein Ycf4 from Lolium perenne (Perennial ryegrass).